The primary structure comprises 561 residues: Carboxylesterase patB (561 aa).

A signal peptide spans 1 to 19 (MQIINWASLLLVTWETVVA). Asn38, Asn69, and Asn109 each carry an N-linked (GlcNAc...) asparagine glycan. Ser263 acts as the Acyl-ester intermediate in catalysis. Substrate is bound at residue Ser263. Asn316 is a glycosylation site (N-linked (GlcNAc...) asparagine). Glu385 functions as the Charge relay system in the catalytic mechanism. N-linked (GlcNAc...) asparagine glycosylation is found at Asn393, Asn412, Asn429, and Asn496.

The protein belongs to the type-B carboxylesterase/lipase family.

Its subcellular location is the cytoplasm. The protein localises to the cytosol. It carries out the reaction a carboxylic ester + H2O = an alcohol + a carboxylate + H(+). Its pathway is mycotoxin biosynthesis; patulin biosynthesis. Functionally, carboxylesterase; part of the gene cluster that mediates the biosynthesis of patulin, an acetate-derived tetraketide mycotoxin produced by several fungal species that shows antimicrobial properties against several bacteria. The function of patB in patulin synthesis has still to be characterized. The pathway begins with the synthesis of 6-methylsalicylic acid by the polyketide synthase (PKS) patK via condensation of acetate and malonate units. The 6-methylsalicylic acid decarboxylase patG then catalyzes the decarboxylation of 6-methylsalicylic acid to yield m-cresol (also known as 3-methylphenol). These first reactions occur in the cytosol. The intermediate m-cresol is then transported into the endoplasmic reticulum where the cytochrome P450 monooxygenase patH converts it to m-hydroxybenzyl alcohol, which is further converted to gentisyl alcohol by the cytochrome P450 monooxygenase patI. The oxidoreductases patJ and patO further convert gentisyl alcohol to isoepoxydon in the vacuole. PatN catalyzes then the transformation of isoepoxydon into phyllostine. The cluster protein patF is responsible for the conversion from phyllostine to neopatulin whereas the alcohol dehydrogenase patD converts neopatulin to E-ascladiol. The steps between isoepoxydon and E-ascladiol occur in the cytosol, and E-ascladiol is probably secreted to the extracellular space by one of the cluster-specific transporters patC or patM. Finally, the secreted patulin synthase patE catalyzes the conversion of E-ascladiol to patulin. The sequence is that of Carboxylesterase patB from Penicillium expansum (Blue mold rot fungus).